The primary structure comprises 197 residues: Recombination protein RecR (197 aa).

Residues 56–71 (CHVCGNYCESDTCNIC) form a C4-type zinc finger. The Toprim domain maps to 79–174 (RIICVVEESK…KITKLASGIP (96 aa)).

It belongs to the RecR family.

Its function is as follows. May play a role in DNA repair. It seems to be involved in an RecBC-independent recombinational process of DNA repair. It may act with RecF and RecO. This chain is Recombination protein RecR, found in Fusobacterium nucleatum subsp. nucleatum (strain ATCC 25586 / DSM 15643 / BCRC 10681 / CIP 101130 / JCM 8532 / KCTC 2640 / LMG 13131 / VPI 4355).